Consider the following 603-residue polypeptide: F-box only protein 46 (603 aa).

Residues 20 to 54 are disordered; sequence YSQNQPRPPSATLKPPVCPDTSSGTEPDHRPAHLE. A phosphoserine mark is found at S21 and S67. 4 disordered regions span residues 111–163, 235–301, 332–359, and 396–442; these read GGSR…PTSS, EAQR…TRAK, EASE…ARDC, and TVSP…GTTD. T347 carries the phosphothreonine modification. The segment covering 347-356 has biased composition (pro residues); the sequence is TPPAPPPPPA. Residues 470–522 form the F-box domain; sequence RQYMLLLPEHVLVKIFSFLPTRALAALKCTCHHFKGIIEAFGVRATDSRWSRD.

As to quaternary structure, part of a SCF (SKP1-cullin-F-box) protein ligase complex SCF(FBXO46) composed of CUL1, SKP1, RBX1 and FBXO46. Phosphorylated by ATM in response to DNA damage, promoting ubiquitination and degradation by the SCF(FBXO31) complex. Post-translationally, ATM-phosphorylated FBXO46 is ubiquitinated and degradaded by the SCF(FBXO31) complex in response to DNA damage.

It participates in protein modification; protein ubiquitination. Its function is as follows. Substrate-recognition component of the SCF(FBXO46) protein ligase complex, which mediates the ubiquitination and degradation of target proteins. In absence of stress, the SCF(FBXO46) complex catalyzes ubiquitination and degradation of MTOR-phosphorylated FBXO31. This is F-box only protein 46 (Fbxo46) from Rattus norvegicus (Rat).